Consider the following 152-residue polypeptide: Cell division protein SepF (152 aa).

The protein belongs to the SepF family. In terms of assembly, homodimer. Interacts with FtsZ.

Its subcellular location is the cytoplasm. In terms of biological role, cell division protein that is part of the divisome complex and is recruited early to the Z-ring. Probably stimulates Z-ring formation, perhaps through the cross-linking of FtsZ protofilaments. Its function overlaps with FtsA. The chain is Cell division protein SepF from Clostridioides difficile (strain 630) (Peptoclostridium difficile).